The chain runs to 429 residues: Adenylosuccinate synthetase (429 aa).

GTP is bound by residues 12-18 (GDEGKGK) and 40-42 (GHT). Asp13 serves as the catalytic Proton acceptor. Mg(2+)-binding residues include Asp13 and Gly40. Residues 13–16 (DEGK), 38–41 (NAGH), Thr128, Arg142, Gln223, Thr238, and Arg302 contribute to the IMP site. The active-site Proton donor is the His41. 298-304 (VNTGRPR) serves as a coordination point for substrate. Residues Arg304, 330-332 (KLD), and 412-414 (GVG) each bind GTP.

The protein belongs to the adenylosuccinate synthetase family. Homodimer. Requires Mg(2+) as cofactor.

The protein localises to the cytoplasm. It catalyses the reaction IMP + L-aspartate + GTP = N(6)-(1,2-dicarboxyethyl)-AMP + GDP + phosphate + 2 H(+). The protein operates within purine metabolism; AMP biosynthesis via de novo pathway; AMP from IMP: step 1/2. Functionally, plays an important role in the de novo pathway of purine nucleotide biosynthesis. Catalyzes the first committed step in the biosynthesis of AMP from IMP. The sequence is that of Adenylosuccinate synthetase from Pseudarthrobacter chlorophenolicus (strain ATCC 700700 / DSM 12829 / CIP 107037 / JCM 12360 / KCTC 9906 / NCIMB 13794 / A6) (Arthrobacter chlorophenolicus).